Reading from the N-terminus, the 92-residue chain is Small ribosomal subunit protein bS20 (92 aa).

A disordered region spans residues 1–23; sequence MANSPSAKKRAIQAEKRRSHNAS.

This sequence belongs to the bacterial ribosomal protein bS20 family.

In terms of biological role, binds directly to 16S ribosomal RNA. The polypeptide is Small ribosomal subunit protein bS20 (Stutzerimonas stutzeri (strain A1501) (Pseudomonas stutzeri)).